We begin with the raw amino-acid sequence, 89 residues long: MCNILIPSNMKTGIKKVKLHVKKNDTVTVISGNDKGKMGKVLKVFPVASRVIVEGVNIRKRHMRPLQGQTQGRIIEREFPIHSSNVKKS.

Belongs to the universal ribosomal protein uL24 family. In terms of assembly, part of the 50S ribosomal subunit.

Its function is as follows. One of two assembly initiator proteins, it binds directly to the 5'-end of the 23S rRNA, where it nucleates assembly of the 50S subunit. One of the proteins that surrounds the polypeptide exit tunnel on the outside of the subunit. This is Large ribosomal subunit protein uL24 from Chlorobium chlorochromatii (strain CaD3).